The following is a 160-amino-acid chain: uncharacterized protein (160 aa).

An N-terminal signal peptide occupies residues 1–27 (MVIGRKAGIIIYVMHALLLLLLSFTFA).

This is an uncharacterized protein from Aquifex aeolicus (strain VF5).